The primary structure comprises 397 residues: 16-O-methyltransferase bsc6 (397 aa).

Asp262 contacts S-adenosyl-L-methionine. His302 functions as the Proton acceptor in the catalytic mechanism.

It belongs to the class I-like SAM-binding methyltransferase superfamily. Cation-independent O-methyltransferase family. S-adenosyl-L-methionine is required as a cofactor.

It functions in the pathway mycotoxin biosynthesis. Functionally, 16-O-methyltransferase; part of the gene cluster that mediates the biosynthesis of the diterpene glucoside brassicicene C. In the first step of the brassicicene C biosynthesis, the bifunctional diterpene synthase bsc8 that possesses both prenyl transferase and terpene cyclase activity, converts isopentenyl diphosphate and dimethylallyl diphosphate into geranylgeranyl diphosphate (GGDP) that is further converted into fusicocca-2,10(14)-diene, the first precursor for brassicicene C. Fusicocca-2,10(14)-diene is then substrate of cytochrome P450 monooxygenase bsc1 for hydroxylation at the C-8 position. Oxidation at C-16 position to aldehyde is then catalyzed by the cytochrome P450 monooyxygenase bsc7, yielding fusicocca-2,10(14)-diene-8-beta,16-diol. Follows the isomerization of the double bond and reduction of aldehyde to alcohol catalyzed by the short-chain dehydrogenase/reductase bsc3 to yield the diol compound fusicocca-1,10(14)-diene-8 beta,16-diol. The next step is the oxidation at the C-3 position of fusicocca-2,10(14)-diene-8-beta,16-diol catalyzed by the alpha-ketoglutarate dependent dioxygenase bsc9, to produce a triol compound. Methylation of the hydroxy group at position 16 is performed by the methyltransferase bsc6. 16-O-methylation is followed by oxidation at the C-13 position to ketone and an alkyl shift of the methyl group leads to brassicicene C. Although the probable acetyltransferase bsc4 is included in the gene cluster, no acetylation reactions are necessary for brassicicene C biosynthesis. However, the fact that brassicicene E, which is a structurally related compound having an acetoxy group at position 12, was previously isolated from another strain of A.brassicicola suggests that the ATCC 96836 strain might also produce a small amount of brassicicene E. This chain is 16-O-methyltransferase bsc6, found in Alternaria brassicicola (Dark leaf spot agent).